The following is a 735-amino-acid chain: DNA replication licensing factor mcm5-B (735 aa).

The 207-residue stretch at isoleucine 332–methionine 538 folds into the MCM domain. Arginine 372 contacts ADP. Positions serine 513–aspartate 516 match the Arginine finger motif.

It belongs to the MCM family. As to quaternary structure, component of the mcm2-7 complex (RLF-M). The complex forms a toroidal hexameric ring with the proposed subunit order mcm2-mcm6-mcm4-mcm7-mcm3-mcm5. The heterodimer of mmcm3/mcm5 interacts with mcm4, mmcm6, mcm7 and weakly with mcm2. Component of the CMG helicase complex, composed of the mcm2-7 complex, the GINS complex and cdc45.

Its subcellular location is the nucleus. The protein resides in the chromosome. It carries out the reaction ATP + H2O = ADP + phosphate + H(+). In terms of biological role, acts as a component of the MCM2-7 complex (MCM complex) which is the replicative helicase essential for 'once per cell cycle' DNA replication initiation and elongation in eukaryotic cells. Core component of CDC45-MCM-GINS (CMG) helicase, the molecular machine that unwinds template DNA during replication, and around which the replisome is built. The active ATPase sites in the MCM2-7 ring are formed through the interaction surfaces of two neighboring subunits such that a critical structure of a conserved arginine finger motif is provided in trans relative to the ATP-binding site of the Walker A box of the adjacent subunit. The six ATPase active sites, however, are likely to contribute differentially to the complex helicase activity. In Xenopus laevis (African clawed frog), this protein is DNA replication licensing factor mcm5-B (mcm5-b).